Reading from the N-terminus, the 281-residue chain is Aminoglycoside N(3)-acetyltransferase IX (281 aa).

Belongs to the antibiotic N-acetyltransferase family.

The enzyme catalyses a 2-deoxystreptamine antibiotic + acetyl-CoA = an N(3)-acetyl-2-deoxystreptamine antibiotic + CoA + H(+). Its function is as follows. Resistance to neomycin. In Micromonospora chalcea, this protein is Aminoglycoside N(3)-acetyltransferase IX (aacC9).